Here is a 250-residue protein sequence, read N- to C-terminus: Dimethyl sulfide dehydrogenase assembly chaperone protein (250 aa).

The disordered stretch occupies residues 231–250 (SAEARSDSAPDAAAHQNLWG).

Belongs to the type II DMSO reductase enzyme chaperone family.

It localises to the cytoplasm. May function as a system-specific chaperone protein essential for the assembly of an active dimethyl sulfide dehydrogenase DdhABC. The polypeptide is Dimethyl sulfide dehydrogenase assembly chaperone protein (ddhD) (Rhodovulum sulfidophilum (Rhodobacter sulfidophilus)).